The primary structure comprises 200 residues: Probable molybdenum cofactor guanylyltransferase (200 aa).

Residues 9–11 (LAG), lysine 21, aspartate 69, and aspartate 100 each bind GTP. A Mg(2+)-binding site is contributed by aspartate 100.

The protein belongs to the MobA family. It depends on Mg(2+) as a cofactor.

Its subcellular location is the cytoplasm. The enzyme catalyses Mo-molybdopterin + GTP + H(+) = Mo-molybdopterin guanine dinucleotide + diphosphate. Transfers a GMP moiety from GTP to Mo-molybdopterin (Mo-MPT) cofactor (Moco or molybdenum cofactor) to form Mo-molybdopterin guanine dinucleotide (Mo-MGD) cofactor. The polypeptide is Probable molybdenum cofactor guanylyltransferase (Bacillus cereus (strain Q1)).